A 382-amino-acid polypeptide reads, in one-letter code: MSSNTAGQVIRCKAAVAWEAGKPLVIEEVEVAPPQKMEVRLKILFTSLCHTDVYFWEAKGQTPLFPRIFGHEAGGIVESVGEGVTDLKPGDHVLPVFTGECQQCRHCKSEESNMCDLLRINTDRGVMIHDGQTRFSKDGKPIYHFVGTSTFSEYTVCHSGCVTKIDPQAPLDKVCVLSCGISTGLGATLNVAKPTKGSTVAIFGLGAVGLAAAEGARIAGASRIIGVDLNPSRFNDAKKFGVTEFVNPKDHGDKPVQQVIAEMTDGGVDRSVECTGNVNAMISAFECVHDGWGVAVLVGVPNKDDAFKTHPMNLLNERTLKGTFFGNYKPKSDIPSVVDKYMKKELELEKFITHQVPFSEINKAFDYMLKGESIRCMITMEH.

Zn(2+)-binding residues include C49, T51, H71, C101, C104, C107, C115, and C179. An alcohol-binding residues include T51 and H71. Residue T51 coordinates NAD(+). NAD(+) is bound by residues 204-209 (GLGAVG), D228, R233, T275, V298, 298-300 (VGV), F325, and R375.

Belongs to the zinc-containing alcohol dehydrogenase family. In terms of assembly, homodimer. Zn(2+) serves as cofactor.

It is found in the cytoplasm. The enzyme catalyses a primary alcohol + NAD(+) = an aldehyde + NADH + H(+). The catalysed reaction is a secondary alcohol + NAD(+) = a ketone + NADH + H(+). Its function is as follows. This protein is responsible for the conversion of alcohols to aldehydes in plants and is important for NAD metabolism during anaerobic respiration. The protein is Alcohol dehydrogenase 1 (ADH1) of Petunia hybrida (Petunia).